A 355-amino-acid chain; its full sequence is UDP-N-acetylglucosamine--N-acetylmuramyl-(pentapeptide) pyrophosphoryl-undecaprenol N-acetylglucosamine transferase (355 aa).

Residues 12–14 (TGG), Asn124, Arg163, Ser191, Ile243, 262–267 (ALTVAE), and Gln288 contribute to the UDP-N-acetyl-alpha-D-glucosamine site.

Belongs to the glycosyltransferase 28 family. MurG subfamily.

It localises to the cell inner membrane. It catalyses the reaction di-trans,octa-cis-undecaprenyl diphospho-N-acetyl-alpha-D-muramoyl-L-alanyl-D-glutamyl-meso-2,6-diaminopimeloyl-D-alanyl-D-alanine + UDP-N-acetyl-alpha-D-glucosamine = di-trans,octa-cis-undecaprenyl diphospho-[N-acetyl-alpha-D-glucosaminyl-(1-&gt;4)]-N-acetyl-alpha-D-muramoyl-L-alanyl-D-glutamyl-meso-2,6-diaminopimeloyl-D-alanyl-D-alanine + UDP + H(+). It functions in the pathway cell wall biogenesis; peptidoglycan biosynthesis. Functionally, cell wall formation. Catalyzes the transfer of a GlcNAc subunit on undecaprenyl-pyrophosphoryl-MurNAc-pentapeptide (lipid intermediate I) to form undecaprenyl-pyrophosphoryl-MurNAc-(pentapeptide)GlcNAc (lipid intermediate II). In Tolumonas auensis (strain DSM 9187 / NBRC 110442 / TA 4), this protein is UDP-N-acetylglucosamine--N-acetylmuramyl-(pentapeptide) pyrophosphoryl-undecaprenol N-acetylglucosamine transferase.